The following is a 255-amino-acid chain: Hydroxyacylglutathione hydrolase (255 aa).

Zn(2+) is bound by residues His52, His54, Asp56, His57, His109, Asp126, and His166.

The protein belongs to the metallo-beta-lactamase superfamily. Glyoxalase II family. In terms of assembly, monomer. Zn(2+) is required as a cofactor.

It carries out the reaction an S-(2-hydroxyacyl)glutathione + H2O = a 2-hydroxy carboxylate + glutathione + H(+). Its pathway is secondary metabolite metabolism; methylglyoxal degradation; (R)-lactate from methylglyoxal: step 2/2. Thiolesterase that catalyzes the hydrolysis of S-D-lactoyl-glutathione to form glutathione and D-lactic acid. This is Hydroxyacylglutathione hydrolase from Anaeromyxobacter dehalogenans (strain 2CP-C).